The primary structure comprises 259 residues: Diphthine synthase (259 aa).

Residues L9, D85, V88, T113–A114, L168, A209, and H234 contribute to the S-adenosyl-L-methionine site.

Belongs to the diphthine synthase family. Homodimer.

It carries out the reaction 2-[(3S)-amino-3-carboxypropyl]-L-histidyl-[translation elongation factor 2] + 3 S-adenosyl-L-methionine = diphthine-[translation elongation factor 2] + 3 S-adenosyl-L-homocysteine + 3 H(+). It participates in protein modification; peptidyl-diphthamide biosynthesis. Functionally, S-adenosyl-L-methionine-dependent methyltransferase that catalyzes the trimethylation of the amino group of the modified target histidine residue in translation elongation factor 2 (EF-2), to form an intermediate called diphthine. The three successive methylation reactions represent the second step of diphthamide biosynthesis. This chain is Diphthine synthase, found in Haloarcula marismortui (strain ATCC 43049 / DSM 3752 / JCM 8966 / VKM B-1809) (Halobacterium marismortui).